Here is a 510-residue protein sequence, read N- to C-terminus: ETS translocation variant 5 (510 aa).

The interval 131-208 is disordered; sequence FKPLTPPTTP…QPLQMPKMMP (78 aa). Residues 161–174 are compositionally biased toward low complexity; sequence GHAPAAGPVQGVGP. A compositionally biased stretch (pro residues) spans 175–185; the sequence is APAPHSLPEPG. Position 248 is a phosphoserine (Ser-248). Lys-350 is covalently cross-linked (Glycyl lysine isopeptide (Lys-Gly) (interchain with G-Cter in SUMO2)). The ETS DNA-binding region spans 368–448; the sequence is LQLWQFLVTL…AGERYVYKFV (81 aa).

Interacts (via C-terminal) with ZMYM5 (via N-terminal 120 amino acid region). As to expression, ubiquitous.

The protein localises to the nucleus. In terms of biological role, binds to DNA sequences containing the consensus nucleotide core sequence 5'-GGAA.-3'. The protein is ETS translocation variant 5 (ETV5) of Homo sapiens (Human).